The chain runs to 87 residues: MTERNDRKVYTGRVVSDKMDKTITVLVETYKFHKLYGKRVKYSKKFKTHDENNVAKNGDVVRIMETRPLSATKRFRLVEVTEEAVII.

The protein belongs to the universal ribosomal protein uS17 family. As to quaternary structure, part of the 30S ribosomal subunit.

Functionally, one of the primary rRNA binding proteins, it binds specifically to the 5'-end of 16S ribosomal RNA. The sequence is that of Small ribosomal subunit protein uS17 from Oceanobacillus iheyensis (strain DSM 14371 / CIP 107618 / JCM 11309 / KCTC 3954 / HTE831).